The sequence spans 932 residues: MAAPTKCQLRGRLVLLCSLLGMLWEARASQIRYSVPEETEKGYIVGNISKDLALEPRELAERRVRIVSRGRTQLFSLNPRSGTLVTAGRIDREELCAQSPRCLVNFKVLVEDRVKLYGIEIEVTDINDSAPKFQAESLEVKINEIAVPGARYPLPEAIDPDVGVNSLQSYQLSPNHHFSLNVQTGDNGAINPELVLERALDREEATAHHLVLTASDGGEPRRSSTVRIHVTVLDTNDNAPVFAQRIYRVKVLENVPPGTWLLTATASDLDEGINGKVAYKFWKINEKQSLLFQLNENTGEISTAKSLDYEECSFYEMEIQAEDGGGLKGWTKVLISVEDVNDNRPEVTITSLFSPVREDAPQGTVILLFNAHDRDSGKNGQVVCSIQENLSFKLENSEEDYYRLLTAQILDREKASEYNITVTATDRGTPPLSTEIHITLQVTDINDNPPAFSQASYSVYLPENNARGTSIFSVIAYDPDSNENSRVIYSLAEDTIQGSPLSTYVSINSDTGVLYALCSFDYEQFRDLQMQVMASDSGSPPLSSNVSLRLFVLDQNDNAPEILYPALPTDGSTGVELAPRSAEPGYLVTKVVAVDRDSGQNAWLSYRLFKTSEPGLFSVGLHTGEVRTARALLDRDALKQSLVVAVQDHGQPPLSATVTLTVAIADSIPDILADLGSLQIPADLEASDLTLYLVVAVAVVSCVFLTFVITLLALRLRHWHSSHLLRATSDGLAGVPTSHFVGVDGVRAFLQTYSQEFSLTADSRKSHLIFPQPNYADTLISQQSCEKNEPLCVSVDSKFPIEDTPLVPQAPPNTDWRFSQAQRPGTSGSQNGDDTGTWPNNQFDTEMLQAMILASASEAADGSSTLGGGAGTMGLSARYGPQFTLQHVPDYRQNVYIPGSNATLTNAAGKRDGKAPAGGNGNKKKSGKKEKK.

Residues 1-28 form the signal peptide; that stretch reads MAAPTKCQLRGRLVLLCSLLGMLWEARA. 6 Cadherin domains span residues 29–133, 134–242, 243–347, 348–452, 453–562, and 570–683; these read SQIR…APKF, QAES…APVF, AQRI…RPEV, TITS…PPAF, SQAS…APEI, and DGST…IPAD. At 29-692 the chain is on the extracellular side; it reads SQIRYSVPEE…DLEASDLTLY (664 aa). N-linked (GlcNAc...) asparagine glycans are attached at residues asparagine 47 and asparagine 127. 3 N-linked (GlcNAc...) asparagine glycosylation sites follow: asparagine 389, asparagine 419, and asparagine 545. Residues 693 to 713 traverse the membrane as a helical segment; sequence LVVAVAVVSCVFLTFVITLLA. Residues 714-932 lie on the Cytoplasmic side of the membrane; that stretch reads LRLRHWHSSH…KKKSGKKEKK (219 aa). 2 disordered regions span residues 803–841 and 902–932; these read DTPL…WPNN and ATLT…KEKK. Positions 816–841 are enriched in polar residues; it reads WRFSQAQRPGTSGSQNGDDTGTWPNN. Over residues 922 to 932 the composition is skewed to basic residues; it reads NKKKSGKKEKK.

The protein resides in the cell membrane. Potential calcium-dependent cell-adhesion protein. May be involved in the establishment and maintenance of specific neuronal connections in the brain. The sequence is that of Protocadherin gamma-A9 (PCDHGA9) from Pan troglodytes (Chimpanzee).